The sequence spans 76 residues: ATP synthase subunit 9, mitochondrial (76 aa).

Helical transmembrane passes span 14–34 and 52–72; these read IATL…VALI and ILGF…SFLL.

The protein belongs to the ATPase C chain family. F-type ATPases have 2 components, CF(1) - the catalytic core - and CF(0) - the membrane proton channel. CF(1) has five subunits: alpha(3), beta(3), gamma(1), delta(1), epsilon(1). CF(0) has three main subunits: a, b and c.

It is found in the mitochondrion membrane. Its function is as follows. Mitochondrial membrane ATP synthase (F(1)F(0) ATP synthase or Complex V) produces ATP from ADP in the presence of a proton gradient across the membrane which is generated by electron transport complexes of the respiratory chain. F-type ATPases consist of two structural domains, F(1) - containing the extramembraneous catalytic core and F(0) - containing the membrane proton channel, linked together by a central stalk and a peripheral stalk. During catalysis, ATP synthesis in the catalytic domain of F(1) is coupled via a rotary mechanism of the central stalk subunits to proton translocation. Part of the complex F(0) domain. A homomeric c-ring of probably 10 subunits is part of the complex rotary element. The chain is ATP synthase subunit 9, mitochondrial (ATP9) from Candida albicans (strain SC5314 / ATCC MYA-2876) (Yeast).